A 167-amino-acid chain; its full sequence is Putative pre-16S rRNA nuclease (167 aa).

The segment at 1 to 24 (MVLTQHRVPDRPGDPDQDPGRGRR) is disordered. Residues 7–21 (RVPDRPGDPDQDPGR) show a composition bias toward basic and acidic residues.

Belongs to the YqgF nuclease family.

The protein localises to the cytoplasm. In terms of biological role, could be a nuclease involved in processing of the 5'-end of pre-16S rRNA. The sequence is that of Putative pre-16S rRNA nuclease from Mycolicibacterium paratuberculosis (strain ATCC BAA-968 / K-10) (Mycobacterium paratuberculosis).